Consider the following 158-residue polypeptide: Small ribosomal subunit protein uS7 (158 aa).

This sequence belongs to the universal ribosomal protein uS7 family. As to quaternary structure, part of the 30S ribosomal subunit. Contacts proteins S9 and S11.

Functionally, one of the primary rRNA binding proteins, it binds directly to 16S rRNA where it nucleates assembly of the head domain of the 30S subunit. Is located at the subunit interface close to the decoding center, probably blocks exit of the E-site tRNA. The polypeptide is Small ribosomal subunit protein uS7 (Granulibacter bethesdensis (strain ATCC BAA-1260 / CGDNIH1)).